The following is a 185-amino-acid chain: C-type lectin domain family 5 member A (185 aa).

Topologically, residues Met-1–His-4 are cytoplasmic. The helical; Signal-anchor for type II membrane protein transmembrane segment at Met-5–Phe-27 threads the bilayer. The Extracellular segment spans residues Pro-28 to Gln-185. N-linked (GlcNAc...) asparagine glycans are attached at residues Asn-35 and Asn-55. A disulfide bridge links Cys-68 with Cys-79. One can recognise a C-type lectin domain in the interval His-75–Glu-181. Residues Asn-90, Asn-117, Asn-141, and Asn-146 are each glycosylated (N-linked (GlcNAc...) asparagine). Cystine bridges form between Cys-96-Cys-180 and Cys-158-Cys-172.

As to quaternary structure, monomer. Homodimer. The majority of CLEC5A is expressed as a monomeric form on macrophages. Interacts with TYROBP/DAP12. The interaction with TYROBP is required for CLEC5 cell surface expression. Interacts with HCST/DAP10. Forms a CLEC5A/TYROBP/HCST trimolecular complex depending almost solely on TYROBP. N-glycosylated. Contains sialic acid residues. Constitutively expressed in monocytes and macrophages.

Its subcellular location is the cell membrane. Functionally, functions as a positive regulator of osteoclastogenesis. Cell surface receptor that signals via TYROBP. Regulates inflammatory responses. This Sus scrofa (Pig) protein is C-type lectin domain family 5 member A (CLEC5A).